The primary structure comprises 256 residues: Dihydromonacolin L-[lovastatin nonaketide synthase] thioesterase (256 aa).

Residues serine 122, aspartate 201, and histidine 229 each act as charge relay system in the active site.

It belongs to the LovG family.

It carries out the reaction dihydromonacolin L-[lovastatin nonaketide synthase] + H2O = holo-[lovastatin nonaketide synthase] + dihydromonacolin L carboxylate + H(+). It functions in the pathway polyketide biosynthesis; lovastatin biosynthesis. In terms of biological role, esterase; part of the gene cluster that mediates the biosynthesis of lovastatin (also known as mevinolin, mevacor or monacolin K), a hypolipidemic inhibitor of (3S)-hydroxymethylglutaryl-coenzyme A (HMG-CoA) reductase (HMGR). The first step in the biosynthesis of lovastatin is the production of dihydromonacolin L acid by the lovastatin nonaketide synthase lovB and the trans-acting enoyl reductase lovC via condensation of one acetyl-CoA unit and 8 malonyl-CoA units. Dihydromonacolin L acid is released from lovB by the thioesterase lovG. Next, dihydromonacolin L acid is oxidized by the dihydromonacolin L monooxygenase lovA twice to form monacolin J acid. The 2-methylbutyrate moiety of lovastatin is synthesized by the lovastatin diketide synthase lovF via condensation of one acetyl-CoA unit and one malonyl-CoA unit. Finally, the covalent attachment of this moiety to monacolin J acid is catalyzed by the transesterase lovD to yield lovastatin. LovD has broad substrate specificity and can also convert monacolin J to simvastatin using alpha-dimethylbutanoyl-S-methyl-3-mercaptopropionate (DMB-S-MMP) as the thioester acyl donor, and can also catalyze the reverse reaction and function as hydrolase in vitro. LovD has much higher activity with LovF-bound 2-methylbutanoate than with free diketide substrates. Esterase that catalyzes the release of covalently bound dihydromonacolin L from LovB during lovastatin biosynthesis. The protein is Dihydromonacolin L-[lovastatin nonaketide synthase] thioesterase of Aspergillus terreus (strain NIH 2624 / FGSC A1156).